The sequence spans 451 residues: MDDIFTQCREGNAVAVRLWLDNTENDLNQGDDHGFSPLHWACREGRSAVVEMLIMRGARINVMNRGDDTPLHLAASHGHRDIVQKLLQYKADINAVNEHGNVPLHYACFWGQDQVAEDLVANGALVSICNKYGEMPMDKAKAPLRELLRERAEKMGQNLNRIPYKDTFWKGTTRTRPRNGTLNKHSGIDFKQLNFLAKLNENHSGELWKGRWQGNDIVVKVLKVRDWSTRKSRDFNEECPRLRIFSHPNVLPVLGACQSPPAPHPTLITHWMPYGSLYNVLHEGTNFVVDQSQAVKFALDMARGMAFLHTLEPLIPRHALNSRSVMIDEDMTARISMADVKFSFQCPGRMYAPAWVAPEALQKKPEDTNRRSADMWSFAVLLWELVTREVPFADLSNMEIGMKVALEGRPTIPPGISPHVCKLMKICMNEDPAKRPKFDMIVPILEKMQDK.

An N-acetylmethionine modification is found at M1. ANK repeat units follow at residues 2–30 (DDIF…LNQG), 31–63 (DDHG…INVM), 64–96 (NRGD…INAV), 97–129 (NEHG…VSIC), and 130–174 (NKYG…GTTR). Residues 33-139 (HGFSPLHWAC…NKYGEMPMDK (107 aa)) are interaction with LIMS1. T173 is subject to Phosphothreonine. A PH-like; mediates interaction with TGFB1I1 region spans residues 180–212 (GTLNKHSGIDFKQLNFLAKLNENHSGELWKGRW). Phosphoserine is present on S186. The Protein kinase domain occupies 193-445 (LNFLAKLNEN…PKFDMIVPIL (253 aa)). Residues N200, N202, H203, and S204 each coordinate ATP. At S246 the chain carries Phosphoserine. H270, M272, and N279 together coordinate ATP. D339 is a binding site for Mg(2+). An ATP-binding site is contributed by K341. The short motif at 363 to 371 (KKPEDTNRR) is the Nuclear localization signal element. N6-acetyllysine is present on K425.

Belongs to the protein kinase superfamily. TKL Ser/Thr protein kinase family. In terms of assembly, component of the heterotrimeric IPP (ILK-PINCH-PARVIN) complex composed of ILK, LIMS1/PINCH and PARVA; the complex binds to F-actin via the C-terminal tail of LIMS1 and the N-terminal region of PARVA, promoting F-actin filament bundling. Formation of the IPP complex is dependent on protein kinase C and precedes integrin-mediated cell adhesion and spreading. ILK also interacts with LIMS2/PINCH2 and with PARVB and PARVG which may substitute for LIMS1 and PARVA in the IPP complex; PARVA and PARVB compete for the same binding site. Interaction with PARVG promotes the establishment of cell polarity required for leukocyte migration. Interacts with the cytoplasmic domain of integrin ITGB1 and may also interact with integrins ITGB2, ITGB3 and/or ITGB5. Interacts probably also with TGFB1I1. Interacts (via ANK repeats) with EPHA1 (via SAM domain); stimulated by EFNA1 but independent of the kinase activity of EPHA1. Interacts with FERMT2. Interacts with LIMD2; leading to activate the protein kinase activity. Interacts with PXN/PAXILLIN (via LD motif 4). Interacts with CCDC25 (via cytoplasmic region); initiating the ILK-PARVB cascade to induce cytoskeleton rearrangement and directional migration of cells. Interacts with IQGAP1; the interaction is required for localization of IQGAP1 to the cell cortex. Phosphorylation by PAK1 modulates ILK subcellular location by promoting its nuclear export.

It localises to the cell junction. It is found in the focal adhesion. Its subcellular location is the cell membrane. The protein resides in the cell projection. The protein localises to the lamellipodium. It localises to the cytoplasm. It is found in the myofibril. Its subcellular location is the sarcomere. The protein resides in the nucleus. The protein localises to the cytoskeleton. It localises to the microtubule organizing center. It is found in the centrosome. Its subcellular location is the cell cortex. Functionally, scaffold protein which mediates protein-protein interactions during a range of cellular events including focal adhesion assembly, cell adhesion and cell migration. Regulates integrin-mediated signal transduction by contributing to inside-out integrin activation. Recruits PARVA and LIMS1/PITCH to form the heterotrimeric IPP (ILK-PINCH-PARVIN) complex which binds to F-actin via the C-terminal tail of LIMS1 and the N-terminal region of PARVA, promoting F-actin filament bundling, a process required to generate force for actin cytoskeleton reorganization and subsequent dynamic cell adhesion events such as cell spreading and migration. Binding to PARVA promotes effective assembly of ILK into focal adhesions while PARVA-bound ILK can simultaneously engage integrin-beta cytoplasmic tails to mediate cell adhesion. Plays a role with PARVG in promoting the cell adhesion and spreading of leukocytes. Acts as an upstream effector of both AKT1/PKB and GSK3. Mediates trafficking of caveolae to the cell surface in an ITGB1-dependent manner by promoting the recruitment of IQGAP1 to the cell cortex which cooperates with its effector DIAPH1 to locally stabilize microtubules and allow stable insertion of caveolae into the plasma membrane. Required for the maintenance of mitotic spindle integrity by promoting phosphorylation of TACC3 by AURKA. Associates with chromatin and may act as a negative regulator of transcription when located in the nucleus. This chain is Scaffold protein ILK, found in Cavia porcellus (Guinea pig).